Consider the following 324-residue polypeptide: Putative arsenical pump-driving ATPase (324 aa).

Gly-21 to Thr-28 contributes to the ATP binding site.

It belongs to the arsA ATPase family.

It catalyses the reaction arsenite(in) + ATP + H2O = arsenite(out) + ADP + phosphate + H(+). In terms of biological role, anion-transporting ATPase. Catalyzes the extrusion of arsenite. This chain is Putative arsenical pump-driving ATPase, found in Methanothermobacter thermautotrophicus (strain ATCC 29096 / DSM 1053 / JCM 10044 / NBRC 100330 / Delta H) (Methanobacterium thermoautotrophicum).